The chain runs to 301 residues: Probable alpha-L-glutamate ligase 2 (301 aa).

An ATP-grasp domain is found at 104–287 (LQLLSRKGIG…VAEPIVEYIE (184 aa)). Residues K141, 178–179 (EY), D187, and 211–213 (RSN) contribute to the ATP site. Mg(2+)-binding residues include D248, E260, and N262. Mn(2+) is bound by residues D248, E260, and N262.

Belongs to the RimK family. Mg(2+) is required as a cofactor. Requires Mn(2+) as cofactor.

The protein is Probable alpha-L-glutamate ligase 2 of Shewanella amazonensis (strain ATCC BAA-1098 / SB2B).